The sequence spans 110 residues: UPF0251 protein PH0803 (110 aa).

This sequence belongs to the UPF0251 family.

This Pyrococcus horikoshii (strain ATCC 700860 / DSM 12428 / JCM 9974 / NBRC 100139 / OT-3) protein is UPF0251 protein PH0803.